We begin with the raw amino-acid sequence, 483 residues long: UDP-N-acetylmuramate--L-alanine ligase (483 aa).

112-118 (GTHGKTT) serves as a coordination point for ATP.

The protein belongs to the MurCDEF family.

It is found in the cytoplasm. The catalysed reaction is UDP-N-acetyl-alpha-D-muramate + L-alanine + ATP = UDP-N-acetyl-alpha-D-muramoyl-L-alanine + ADP + phosphate + H(+). It participates in cell wall biogenesis; peptidoglycan biosynthesis. Cell wall formation. The protein is UDP-N-acetylmuramate--L-alanine ligase of Ralstonia nicotianae (strain ATCC BAA-1114 / GMI1000) (Ralstonia solanacearum).